The primary structure comprises 140 residues: Nucleoside diphosphate kinase (140 aa).

ATP is bound by residues K11, F59, R87, T93, R104, and N114. The active-site Pros-phosphohistidine intermediate is H117.

This sequence belongs to the NDK family. In terms of assembly, homotetramer. Mg(2+) serves as cofactor.

The protein resides in the cytoplasm. It carries out the reaction a 2'-deoxyribonucleoside 5'-diphosphate + ATP = a 2'-deoxyribonucleoside 5'-triphosphate + ADP. The catalysed reaction is a ribonucleoside 5'-diphosphate + ATP = a ribonucleoside 5'-triphosphate + ADP. Its function is as follows. Major role in the synthesis of nucleoside triphosphates other than ATP. The ATP gamma phosphate is transferred to the NDP beta phosphate via a ping-pong mechanism, using a phosphorylated active-site intermediate. This chain is Nucleoside diphosphate kinase, found in Rhodopseudomonas palustris (strain BisA53).